Consider the following 407-residue polypeptide: WEB family protein At3g51720 (407 aa).

Coiled-coil stretches lie at residues 72–99 (KVLK…DKEN), 128–217 (SVGL…ARAA), and 247–278 (EEIL…EAEE).

Belongs to the WEB family.

The protein is WEB family protein At3g51720 of Arabidopsis thaliana (Mouse-ear cress).